The sequence spans 123 residues: Holo-[acyl-carrier-protein] synthase (123 aa).

The Mg(2+) site is built by D8 and E60.

Belongs to the P-Pant transferase superfamily. AcpS family. Mg(2+) is required as a cofactor.

The protein resides in the cytoplasm. It carries out the reaction apo-[ACP] + CoA = holo-[ACP] + adenosine 3',5'-bisphosphate + H(+). In terms of biological role, transfers the 4'-phosphopantetheine moiety from coenzyme A to a Ser of acyl-carrier-protein. This is Holo-[acyl-carrier-protein] synthase from Ehrlichia ruminantium (strain Gardel).